Here is a 358-residue protein sequence, read N- to C-terminus: Probable tartrate dehydrogenase/decarboxylase TtuC' (358 aa).

Residues aspartate 222, aspartate 246, and aspartate 250 each contribute to the Mn(2+) site.

Belongs to the isocitrate and isopropylmalate dehydrogenases family. Mg(2+) serves as cofactor. Mn(2+) is required as a cofactor. The cofactor is K(+).

It is found in the cytoplasm. It carries out the reaction tartrate + NAD(+) = 2-hydroxy-3-oxosuccinate + NADH + H(+). It catalyses the reaction (2R,3S)-tartrate + NAD(+) = 2-hydroxy-3-oxosuccinate + NADH + H(+). The catalysed reaction is (2R,3R)-tartrate + NAD(+) = 2-hydroxy-3-oxosuccinate + NADH + H(+). The enzyme catalyses (2R,3R)-tartrate + H(+) = (R)-glycerate + CO2. It carries out the reaction (R)-malate + NAD(+) = pyruvate + CO2 + NADH. It participates in carbohydrate acid metabolism; tartrate degradation; 2-hydroxy-3-oxosuccinate from L-tartrate: step 1/1. It functions in the pathway carbohydrate acid metabolism; tartrate degradation; 2-hydroxy-3-oxosuccinate from meso-tartrate: step 1/1. The protein operates within carbohydrate acid metabolism; tartrate degradation; D-glycerate from L-tartrate: step 1/1. Functionally, has multiple catalytic activities. Apart from catalyzing the oxidation of (+)-tartrate to oxaloglycolate, also converts meso-tartrate to D-glycerate and catalyzes the oxidative decarboxylation of D-malate to pyruvate. This is Probable tartrate dehydrogenase/decarboxylase TtuC' (ttuC') from Agrobacterium vitis (Rhizobium vitis).